The chain runs to 340 residues: Adenosine receptor A2b (340 aa).

At 1-6 (MNTMKT) the chain is on the extracellular side. A helical transmembrane segment spans residues 7 to 31 (TYIVLELIIAVLSIAGNVLVCWAVA). Residues 32-41 (INSTLKNATN) are Cytoplasmic-facing. The helical transmembrane segment at 42–65 (YFLVSLAVADIAVGLLAIPFAITI) threads the bilayer. Residues 66-76 (SIGFQVDFHSC) lie on the Extracellular side of the membrane. The cysteines at positions 76 and 171 are disulfide-linked. Residues 77–99 (LFFACFVLVLTQSSIFSLLAVAI) form a helical membrane-spanning segment. Residues 100 to 119 (DRYLAIKIPLRYNSLVTGKR) lie on the Cytoplasmic side of the membrane. A helical membrane pass occupies residues 120–142 (ARGLIAVLWLLSFVIGLTPLMGW). Residues 143-178 (NKAMSGCPNSTNETGADHGAGHHGCFISCLFENVVT) lie on the Extracellular side of the membrane. Asn151 and Asn154 each carry an N-linked (GlcNAc...) asparagine glycan. Adenosine is bound at residue Glu174. Residues 179 to 203 (MSYMVYFNFFGCVLLPLIIMLGIYI) form a helical membrane-spanning segment. At 204–235 (KIFMVACKQLHQIELMGNSRTTLQKEVHAAKS) the chain is on the cytoplasmic side. Residues 236–259 (LAIIVGLFAFCWLPLHILNCITHF) traverse the membrane as a helical segment. Asn254 contacts adenosine. The Extracellular segment spans residues 260 to 267 (HEEFSKSK). Residues 268-291 (PEWVMYVAIILSHANSVINPIIYA) traverse the membrane as a helical segment. 2 residues coordinate adenosine: Ser279 and His280. Over 292-340 (YRIRDFRYTFHKIISKILCKTDDFPKCTTDNNQHLTVTNVNAPAASVTI) the chain is Cytoplasmic. Cys310 carries the S-palmitoyl cysteine lipid modification.

The protein belongs to the G-protein coupled receptor 1 family.

The protein localises to the cell membrane. In terms of biological role, receptor for adenosine. The activity of this receptor is mediated by G proteins which activate adenylyl cyclase. The sequence is that of Adenosine receptor A2b (ADORA2B) from Gallus gallus (Chicken).